A 196-amino-acid polypeptide reads, in one-letter code: Ribosomal RNA large subunit methyltransferase E (196 aa).

Positions 50, 52, 70, 87, and 112 each coordinate S-adenosyl-L-methionine. Lys-152 functions as the Proton acceptor in the catalytic mechanism.

This sequence belongs to the class I-like SAM-binding methyltransferase superfamily. RNA methyltransferase RlmE family.

Its subcellular location is the cytoplasm. The enzyme catalyses uridine(2552) in 23S rRNA + S-adenosyl-L-methionine = 2'-O-methyluridine(2552) in 23S rRNA + S-adenosyl-L-homocysteine + H(+). Functionally, specifically methylates the uridine in position 2552 of 23S rRNA at the 2'-O position of the ribose in the fully assembled 50S ribosomal subunit. The polypeptide is Ribosomal RNA large subunit methyltransferase E (Bdellovibrio bacteriovorus (strain ATCC 15356 / DSM 50701 / NCIMB 9529 / HD100)).